A 438-amino-acid polypeptide reads, in one-letter code: sn-glycerol-3-phosphate-binding periplasmic protein UgpB (438 aa).

The first 23 residues, 1 to 23, serve as a signal peptide directing secretion; the sequence is MKPLHYTASALALGLALMGNAQA. Positions 65, 89, 144, 270, 307, 346, and 397 each coordinate sn-glycerol 3-phosphate.

Belongs to the bacterial solute-binding protein 1 family. In terms of assembly, the complex is composed of two ATP-binding proteins (UgpC), two transmembrane proteins (UgpA and UgpE) and a solute-binding protein (UgpB).

Its subcellular location is the periplasm. Functionally, part of the ABC transporter complex UgpBAEC involved in sn-glycerol-3-phosphate (G3P) import. Binds G3P. In Shigella dysenteriae serotype 1 (strain Sd197), this protein is sn-glycerol-3-phosphate-binding periplasmic protein UgpB (ugpB).